A 279-amino-acid polypeptide reads, in one-letter code: DegV domain-containing protein spr1019 (279 aa).

The region spanning 4-277 is the DegV domain; it reads IKIVTDSSVT…ENAWAILIRY (274 aa). Residues T62 and S94 each coordinate hexadecanoate.

Functionally, may bind long-chain fatty acids, such as palmitate, and may play a role in lipid transport or fatty acid metabolism. The sequence is that of DegV domain-containing protein spr1019 from Streptococcus pneumoniae (strain ATCC BAA-255 / R6).